The chain runs to 449 residues: Trigger factor (449 aa).

The region spanning 172–257 (GDRVTVDFVG…LKQVEWAHLP (86 aa)) is the PPIase FKBP-type domain.

The protein belongs to the FKBP-type PPIase family. Tig subfamily.

The protein resides in the cytoplasm. The catalysed reaction is [protein]-peptidylproline (omega=180) = [protein]-peptidylproline (omega=0). Involved in protein export. Acts as a chaperone by maintaining the newly synthesized protein in an open conformation. Functions as a peptidyl-prolyl cis-trans isomerase. The sequence is that of Trigger factor from Ralstonia nicotianae (strain ATCC BAA-1114 / GMI1000) (Ralstonia solanacearum).